We begin with the raw amino-acid sequence, 96 residues long: Large ribosomal subunit protein uL23 (96 aa).

Belongs to the universal ribosomal protein uL23 family. In terms of assembly, part of the 50S ribosomal subunit. Contacts protein L29, and trigger factor when it is bound to the ribosome.

In terms of biological role, one of the early assembly proteins it binds 23S rRNA. One of the proteins that surrounds the polypeptide exit tunnel on the outside of the ribosome. Forms the main docking site for trigger factor binding to the ribosome. The sequence is that of Large ribosomal subunit protein uL23 from Aster yellows witches'-broom phytoplasma (strain AYWB).